The following is a 1820-amino-acid chain: Afadin (1820 aa).

In terms of domain architecture, Ras-associating 1 spans 39–133 (FHGVMRFYFQ…GRFVLKNEND (95 aa)). Residues 129–196 (KNENDAIPAK…PSQGDDSENS (68 aa)) are disordered. Residues 146 to 186 (EKQEKEGVIQNFKRTLSKKEKKEKKKKEKEALRQASDKEER) are a coiled coil. Over residues 160–172 (TLSKKEKKEKKKK) the composition is skewed to basic residues. Over residues 173–189 (EKEALRQASDKEERPSQ) the composition is skewed to basic and acidic residues. Phosphoserine occurs at positions 216, 246, and 256. The Ras-associating 2 domain maps to 246–348 (SGGTLRIYAD…LVFQLKRRPP (103 aa)). Residues 356 to 371 (KKHVEGKSLKGKDRAD) show a composition bias toward basic and acidic residues. A disordered region spans residues 356–377 (KKHVEGKSLKGKDRADGSGYGS). 2 positions are modified to phosphoserine: S391 and S424. The FHA domain maps to 426 to 492 (TEVGTEKFDD…LQSGMRLQFG (67 aa)). Phosphoserine occurs at positions 512, 557, 562, 655, 1083, 1107, 1126, 1140, 1143, 1172, 1173, 1182, and 1199. The tract at residues 538–569 (GDVHSGTALPASRSTTRLDSDRVSSASSTAER) is disordered. The 256-residue stretch at 653 to 908 (DISPTERTHK…IENVVAVAEN (256 aa)) folds into the Dilute domain. The PDZ domain occupies 1007 to 1093 (IITVTLKKQN…VVTLEVAKQG (87 aa)). The tract at residues 1107 to 1194 (SPMMQRISDR…GKGPYTSGTA (88 aa)) is disordered. Basic and acidic residues predominate over residues 1113 to 1128 (ISDRRGSGKPRPKSEG). The segment covering 1132–1143 (YNNSAQNGSPES) has biased composition (polar residues). Positions 1152 to 1172 (SEPKKLPGDDRLMKNRADHRS) are enriched in basic and acidic residues. Residues 1203–1222 (GNLCTEEQSPPPRPEAYPIP) are disordered. Phosphothreonine is present on T1232. Disordered stretches follow at residues 1235–1278 (ASKS…SQEE), 1308–1527 (QSSS…KQQQ), and 1567–1716 (RLQE…LKTQ). The residue at position 1238 (S1238) is a Phosphoserine. Positions 1252-1262 (YEEKPHVHTES) are enriched in basic and acidic residues. Phosphoserine is present on S1275. Low complexity predominate over residues 1309-1318 (SSSVESSTSS). The segment covering 1325-1337 (SSKSVTPASTLTK) has biased composition (polar residues). At S1328 the chain carries Phosphoserine. At T1330 the chain carries Phosphothreonine. Over residues 1364-1373 (LPPPPPPPPV) the composition is skewed to pro residues. Basic and acidic residues predominate over residues 1407–1440 (EWKKREEHQRWYEKEKARLEEERERKRREQERKL). Residues 1410 to 1446 (KREEHQRWYEKEKARLEEERERKRREQERKLGQMRSQ) adopt a coiled-coil conformation. A compositionally biased stretch (polar residues) spans 1443–1457 (MRSQTLNPASFSPLA). Over residues 1487-1503 (TIERKDLQYITISKEEL) the composition is skewed to basic and acidic residues. S1499 and S1510 each carry phosphoserine. The segment covering 1513–1526 (PWKRDAREKLEKQQ) has biased composition (basic and acidic residues). The stretch at 1523–1561 (EKQQQMHIVDMLSKEIHELQNKVDRTAEESDRLRKLMLE) forms a coiled coil. A compositionally biased stretch (acidic residues) spans 1576–1587 (EDDDEEEDDDVD). Residues 1593–1665 (QRLEAERRAR…SRLEAERRRQ (73 aa)) adopt a coiled-coil conformation. Residues 1595 to 1675 (LEAERRARMQ…HEEAARRLLE (81 aa)) are compositionally biased toward basic and acidic residues. 4 positions are modified to phosphoserine: S1694, S1719, S1770, and S1795. A disordered region spans residues 1734–1820 (EEEDYGPAGP…TELENELNTK (87 aa)). Residues 1759–1772 (APREAREKLTRSQD) show a composition bias toward basic and acidic residues. A compositionally biased stretch (basic and acidic residues) spans 1800 to 1820 (VSDKVKASRKLTELENELNTK). N6-acetyllysine is present on K1803.

In terms of assembly, homodimer. Interacts with F-actin, nectin and NECTIN3. Essential for the association of nectin and E-cadherin. Isoform 2/s-afadin does not interact with F-actin. Interacts with ZO-1 and occludin, but probably in an indirect manner. Interacts with RIT1, RIT2, NRXN1 and BCR. Interacts with ADAM10; the interaction locks ADAM10 at adherens junctions following ADAM10 recruitment to adherens junctions by TSPAN33. As to expression, isoform 1 is expressed only in a restricted set of epithelial structures during early embryogenesis.

The protein resides in the cell junction. Its subcellular location is the adherens junction. In terms of biological role, belongs to an adhesion system, probably together with the E-cadherin-catenin system, which plays a role in the organization of homotypic, interneuronal and heterotypic cell-cell adherens junctions (AJs). Nectin- and actin-filament-binding protein that connects nectin to the actin cytoskeleton. May play a key role in the organization of epithelial structures of the embryonic ectoderm. Essential for the organization of adherens junctions. In Mus musculus (Mouse), this protein is Afadin.